We begin with the raw amino-acid sequence, 330 residues long: Anthranilate phosphoribosyltransferase (330 aa).

5-phospho-alpha-D-ribose 1-diphosphate is bound by residues glycine 79, 82 to 83 (GD), threonine 87, 89 to 92 (NIST), 107 to 115 (KHGNYGVSS), and serine 119. An anthranilate-binding site is contributed by glycine 79. Residue serine 91 coordinates Mg(2+). Position 110 (asparagine 110) interacts with anthranilate. Arginine 165 is a binding site for anthranilate. Mg(2+) is bound by residues aspartate 223 and glutamate 224.

This sequence belongs to the anthranilate phosphoribosyltransferase family. In terms of assembly, homodimer. Requires Mg(2+) as cofactor.

The catalysed reaction is N-(5-phospho-beta-D-ribosyl)anthranilate + diphosphate = 5-phospho-alpha-D-ribose 1-diphosphate + anthranilate. It participates in amino-acid biosynthesis; L-tryptophan biosynthesis; L-tryptophan from chorismate: step 2/5. Functionally, catalyzes the transfer of the phosphoribosyl group of 5-phosphorylribose-1-pyrophosphate (PRPP) to anthranilate to yield N-(5'-phosphoribosyl)-anthranilate (PRA). This is Anthranilate phosphoribosyltransferase from Flavobacterium psychrophilum (strain ATCC 49511 / DSM 21280 / CIP 103535 / JIP02/86).